The sequence spans 211 residues: ATP phosphoribosyltransferase (211 aa).

This sequence belongs to the ATP phosphoribosyltransferase family. Short subfamily. Heteromultimer composed of HisG and HisZ subunits.

It localises to the cytoplasm. The enzyme catalyses 1-(5-phospho-beta-D-ribosyl)-ATP + diphosphate = 5-phospho-alpha-D-ribose 1-diphosphate + ATP. It participates in amino-acid biosynthesis; L-histidine biosynthesis; L-histidine from 5-phospho-alpha-D-ribose 1-diphosphate: step 1/9. Catalyzes the condensation of ATP and 5-phosphoribose 1-diphosphate to form N'-(5'-phosphoribosyl)-ATP (PR-ATP). Has a crucial role in the pathway because the rate of histidine biosynthesis seems to be controlled primarily by regulation of HisG enzymatic activity. The sequence is that of ATP phosphoribosyltransferase from Bacillus cereus (strain ATCC 10987 / NRS 248).